A 155-amino-acid chain; its full sequence is Ribosomal RNA large subunit methyltransferase H (155 aa).

S-adenosyl-L-methionine is bound by residues L72, G103, and L122–L127.

Belongs to the RNA methyltransferase RlmH family. Homodimer.

It localises to the cytoplasm. It carries out the reaction pseudouridine(1915) in 23S rRNA + S-adenosyl-L-methionine = N(3)-methylpseudouridine(1915) in 23S rRNA + S-adenosyl-L-homocysteine + H(+). Specifically methylates the pseudouridine at position 1915 (m3Psi1915) in 23S rRNA. The polypeptide is Ribosomal RNA large subunit methyltransferase H (Pasteurella multocida (strain Pm70)).